The following is a 291-amino-acid chain: Acetylglutamate kinase (291 aa).

Substrate-binding positions include Gly64 to Gly65, Arg86, and Asn190.

This sequence belongs to the acetylglutamate kinase family. ArgB subfamily.

Its subcellular location is the cytoplasm. It catalyses the reaction N-acetyl-L-glutamate + ATP = N-acetyl-L-glutamyl 5-phosphate + ADP. It functions in the pathway amino-acid biosynthesis; L-arginine biosynthesis; N(2)-acetyl-L-ornithine from L-glutamate: step 2/4. Catalyzes the ATP-dependent phosphorylation of N-acetyl-L-glutamate. The protein is Acetylglutamate kinase of Leptospira borgpetersenii serovar Hardjo-bovis (strain JB197).